A 197-amino-acid chain; its full sequence is Non-structural protein 5 (197 aa).

Residues 17 to 30 (IFKNESSSTTSTLS) show a composition bias toward low complexity. Disordered stretches follow at residues 17–37 (IFKN…IGRS) and 53–72 (LSKS…DPLT). S67 carries the post-translational modification Phosphoserine; by host CK1. Residue D92 participates in Mg(2+) binding. Phosphoserine; by host is present on residues S153, S155, S163, and S165.

It belongs to the rotavirus NSP5 family. As to quaternary structure, homodimer. Interacts with VP1. Interacts with VP2. Interacts with NSP2; this interaction leads to up-regulation of NSP5 hyperphosphorylation and formation of virus factories. Interacts with NSP6. Participates in the selective exclusion of host proteins from stress granules (SG) and P bodies (PB). Also participates in the sequestration of these remodeled organelles in viral factories. The cofactor is Mg(2+). Post-translationally, O-glycosylated. In terms of processing, hyperphosphorylated on serine residues, when in dimeric form. Phosphorylation by host CK1 is required for the hyperphosphorylation of NSP5 dimer.

It localises to the host cytoplasm. Plays an essential role in the viral genome replication. Participates, together with NSP2, in the formation of viral factories (viroplasms), which are large inclusions in the host cytoplasm where replication intermediates are assembled and viral RNA replication takes place. Orchestrates the recruitment of viroplasmic proteins such as capsid proteins to these factories. Participates in the selective exclusion of host proteins from stress granules (SG) and P bodies (PB). Also participates in the sequestration of these remodeled organelles in viral factories. The protein is Non-structural protein 5 of Rotavirus A (strain RVA/Human/United Kingdom/ST3/1975/G4P2A[6]) (RV-A).